A 532-amino-acid chain; its full sequence is Cytochrome P450 714B2 (532 aa).

Residues 1–2 (ME) are Lumenal-facing. The chain crosses the membrane as a helical; Signal-anchor for type III membrane protein span at residues 3–23 (VGMVVVVAAKVLVSLWCVGAC). The Cytoplasmic segment spans residues 24 to 532 (CLAAYLYRVV…LTRVQGAYRH (509 aa)). Position 474 (Cys474) interacts with heme.

The protein belongs to the cytochrome P450 family. It depends on heme as a cofactor. In terms of tissue distribution, highly expressed in shoot, spikelet and uppermost internode. Detected in roots, leaves and anthers.

It is found in the membrane. In terms of biological role, catalyzes the 13-hydroxylation of gibberellins (GAs). Determines the ratio of GA4 and GA1. Converts GA12 into GA53. The polypeptide is Cytochrome P450 714B2 (CYP714B2) (Oryza sativa subsp. japonica (Rice)).